The chain runs to 110 residues: UPF0060 membrane protein Bcep1808_1236 (110 aa).

3 consecutive transmembrane segments (helical) span residues 9–29, 34–54, and 66–86; these read ALFAVTAVAEIVGCYLPWLVL, PVWLLVPAALSLALFAWLLTL, and YGGVYIGVALLWLRVVDGVAL.

It belongs to the UPF0060 family.

The protein localises to the cell inner membrane. The polypeptide is UPF0060 membrane protein Bcep1808_1236 (Burkholderia vietnamiensis (strain G4 / LMG 22486) (Burkholderia cepacia (strain R1808))).